Consider the following 459-residue polypeptide: MKDFFRMRTAQQPATRHWRHTVAPGGLPLAGHALLMARKPLQFLASLPAHGDLVELRLGPRPVYLPCHPELVQQVLVNARVYDTGGPVKEKAKPILGNGLITSDWADHRRQRRLVQPAFHTARIAKYAEVMERECEAESTAWTARRPIDVSHEMLALTARVTARALFSTDMAPHAVAEIQHCLPIVVEGAYRQAIDPTGLLAKLPLAANRRFDDALARLNQLIDRMIDDYKASDDGDRGDVLSALFAAQDDETGGTMSDQEIHDQVMTLLLAGIETTASALTWAWFLLGRNPGAEAALHAEVDEVLGGRAPRYADVPRLAYTQRVFSEALRLFPPAWLFTRTTTETTELGGRRLPPASDVLISPYVLHRDPALFPRPDSFDPDRWLPERAKEVTRGSYLPFGGGSRKCIGDVFGMTEATLALAAIAGRWRMRPIPGTKIRPRPQMSLTAGPLRMIPEPR.

Cysteine 408 is a binding site for heme.

This sequence belongs to the cytochrome P450 family. Heme is required as a cofactor.

The catalysed reaction is cyclooctat-9-ene-5,7-diol + AH2 + O2 = cyclooctatin + A + H2O. Functionally, involved in the biosynthesis of cyclooctatin, a potent inhibitor of lysophospholipase. Catalyzes the hydroxylation of cyclooctat-9-ene-5,7-diol at C-18 to yield the final product, cyclooctatin. The polypeptide is Cyclooctatin synthase (Streptomyces melanosporofaciens).